A 475-amino-acid chain; its full sequence is Isocitrate dehydrogenase [NADP] (475 aa).

Threonine 104 serves as a coordination point for NADP(+). Residues serine 113, asparagine 115, arginine 119, arginine 129, and arginine 153 each contribute to the D-threo-isocitrate site. Position 362 (aspartate 362) interacts with Mg(2+). NADP(+) contacts are provided by residues histidine 394–histidine 400, asparagine 407, tyrosine 446, and arginine 450.

Belongs to the isocitrate and isopropylmalate dehydrogenases family. Homodimer. The cofactor is Mg(2+). Requires Mn(2+) as cofactor.

It is found in the cytoplasm. The enzyme catalyses D-threo-isocitrate + NADP(+) = 2-oxoglutarate + CO2 + NADPH. With respect to regulation, inhibited non-competitively by ADP and 2-oxoglutarate, with respect to isocitrate and in a competitive manner by NADPH. Its function is as follows. Catalyzes the oxidative decarboxylation of isocitrate to 2-oxoglutarate and carbon dioxide with the concomitant reduction of NADP(+). Is specific for NADP(+), cannot use NAD(+). The sequence is that of Isocitrate dehydrogenase [NADP] from Synechocystis sp. (strain ATCC 27184 / PCC 6803 / Kazusa).